Consider the following 277-residue polypeptide: MNKILEVENLVFKYEKESDVNQLNGVSFSITKGEWVSIIGQNGSGKSTTARLIDGLFEEFEGIVKIDGERLTAENVWNLRRKIGMVFQNPDNQFVGATVEDDVAFGMENQGIPREEMIKRVDEALLAVNMLDFKTREPARLSGGQKQRVAVAGIIALRPEIIILDESTSMLDPTGRSEIMRVIHEIKDKYHLTVLSITHDLDEAASSDRILVMRAGEIIKEAAPSELFATSEDMVEIGLDVPFSSNLMKDLRTNGFDLPEKYLSEDELVELLADKLG.

The 236-residue stretch at 5 to 240 (LEVENLVFKY…SEDMVEIGLD (236 aa)) folds into the ABC transporter domain. 40-47 (GQNGSGKS) is an ATP binding site. E166 serves as the catalytic Proton acceptor.

The protein belongs to the ABC transporter superfamily. Energy-coupling factor EcfA family. As to quaternary structure, forms a stable energy-coupling factor (ECF) transporter complex composed of 2 membrane-embedded substrate-binding proteins (S component), 2 ATP-binding proteins (A component) and 2 transmembrane proteins (T component). In L.lactis forms a stable complex with EcfA' and EcfT and substrate-binding components. In E.coli forms a stable complex with EcfA', EcfT and individually with 3 tested substrate-binding components (BioY, NiaX and ThiT) with a stoichiometry of 1.1:1:1. The core ECF complex interacts with a number of substrate-specific binding components, including BioY, BioY2, HmpT, NiaX, PanT, QueT, RibU and ThiT.

The protein resides in the cell membrane. In terms of biological role, ATP-binding (A) component of a common energy-coupling factor (ECF) ABC-transporter complex. Unlike classic ABC transporters this ECF transporter provides the energy necessary to transport a number of different substrates. In this organism these probably include biotin, thiamine precursor, niacin, pantothenic acid, queuosine precursor, riboflavin and thiamine. Uptake of niacin or riboflavin into proteosomes containing EcfA1A2T and Niax or RibU has been demonstrated. Uptake requires hydrolyzable Mg-ATP and is substrate-specific; NiaX-containing proteosomes did not transport riboflavin. The sequence is that of Energy-coupling factor transporter ATP-binding protein EcfA1 from Lactococcus lactis subsp. cremoris (strain MG1363).